The sequence spans 273 residues: Elongation factor Ts (273 aa).

Residues 79–82 (TDFV) form an involved in Mg(2+) ion dislocation from EF-Tu region.

The protein belongs to the EF-Ts family.

It is found in the cytoplasm. Functionally, associates with the EF-Tu.GDP complex and induces the exchange of GDP to GTP. It remains bound to the aminoacyl-tRNA.EF-Tu.GTP complex up to the GTP hydrolysis stage on the ribosome. This Hydrogenobaculum sp. (strain Y04AAS1) protein is Elongation factor Ts.